A 74-amino-acid chain; its full sequence is U19-theraphotoxin-Cg1a (74 aa).

The first 7 residues, 1-7 (IMFVWAS), serve as a signal peptide directing secretion. A propeptide spanning residues 8–36 (AAEVEERGSDQRDSPASLKSMETIFQSEQ) is cleaved from the precursor. 3 disulfides stabilise this stretch: Cys39–Cys53, Cys46–Cys58, and Cys52–Cys66.

It belongs to the neurotoxin 10 (Hwtx-1) family. 38 (Jztx-33) subfamily. Expressed by the venom gland.

It is found in the secreted. In terms of biological role, probable ion channel inhibitor. In Chilobrachys guangxiensis (Chinese earth tiger tarantula), this protein is U19-theraphotoxin-Cg1a.